Here is a 190-residue protein sequence, read N- to C-terminus: uncharacterized protein (190 aa).

Positions 1 to 15 (MKVFAYIALATVVAG) are cleaved as a signal peptide.

It localises to the secreted. This is an uncharacterized protein from Arthroderma benhamiae (strain ATCC MYA-4681 / CBS 112371) (Trichophyton mentagrophytes).